A 439-amino-acid chain; its full sequence is Acyl-coenzyme A thioesterase 10, mitochondrial (439 aa).

The transit peptide at 1-21 (MKRAAMRLWTLNKGLLTHGRG) directs the protein to the mitochondrion. 2 consecutive HotDog ACOT-type domains span residues 85–209 (SYIE…QDSE) and 289–401 (EDTK…EKEV).

This sequence belongs to the acyl coenzyme A hydrolase family.

It localises to the mitochondrion. Catalyzes the hydrolysis of acyl-CoAs into free fatty acids and coenzyme A (CoASH), regulating their respective intracellular levels. Active on long chain acyl-CoAs. This is Acyl-coenzyme A thioesterase 10, mitochondrial from Mus musculus (Mouse).